We begin with the raw amino-acid sequence, 98 residues long: NADH-ubiquinone oxidoreductase chain 4L (98 aa).

The next 3 helical transmembrane spans lie at 1–21 (MSMV…GLLM), 29–49 (SLLC…VTIL), and 61–81 (IILL…LVMV).

It belongs to the complex I subunit 4L family. In terms of assembly, core subunit of respiratory chain NADH dehydrogenase (Complex I) which is composed of 45 different subunits.

It localises to the mitochondrion inner membrane. It catalyses the reaction a ubiquinone + NADH + 5 H(+)(in) = a ubiquinol + NAD(+) + 4 H(+)(out). In terms of biological role, core subunit of the mitochondrial membrane respiratory chain NADH dehydrogenase (Complex I) which catalyzes electron transfer from NADH through the respiratory chain, using ubiquinone as an electron acceptor. Part of the enzyme membrane arm which is embedded in the lipid bilayer and involved in proton translocation. The chain is NADH-ubiquinone oxidoreductase chain 4L (MT-ND4L) from Erignathus barbatus (Bearded seal).